Consider the following 496-residue polypeptide: Pseudooxynicotine dehydrogenase (496 aa).

A signal peptide (tat-type signal) is located at residues 1-42 (MTKDGDEGSKSGVSRRKFLGSAAVGVATAGIASQLLTLSAPA). 7 residues coordinate FAD: Ala-69, Glu-88, Arg-96, Trp-113, Val-285, Ser-461, and Ile-471.

It belongs to the flavin monoamine oxidase family. Homodimer. FAD serves as cofactor. In terms of processing, predicted to be exported by the Tat system. The position of the signal peptide cleavage has not been experimentally proven.

Its subcellular location is the periplasm. The enzyme catalyses pseudooxynicotine + 2 Fe(III)-[cytochrome c] + H2O = 4-oxo-4-(pyridin-3-yl)butanal + methylamine + 2 Fe(II)-[cytochrome c] + 2 H(+). Its pathway is alkaloid degradation; nicotine degradation. Its activity is regulated as follows. Strongly inhibited by Na(2)MoO(4) and FeCl(3). Activity is nearly twice as high in the presence of Na(2)WO(4). Functionally, involved in nicotine degradation. Catalyzes the deamination of pseudooxynicotine to 3-succinoylsemialdehyde-pyridine. Functions as a dehydrogenase that uses the c-type cytochrome protein CycN as the physiological electron acceptor. O(2) is a poor electron acceptor. Pnao is oxidized by CycN 230 times faster than O(2) at equivalent oxidant concentrations. The polypeptide is Pseudooxynicotine dehydrogenase (Pseudomonas putida (strain DSM 28022 / S16)).